The sequence spans 260 residues: NAD-capped RNA hydrolase NudC (260 aa).

Residues K25 and R69 each contribute to the substrate site. The Zn(2+) site is built by C98 and C101. E111 is a binding site for substrate. The Zn(2+) site is built by C116 and C119. Y124 serves as a coordination point for substrate. The Nudix hydrolase domain maps to 125 to 248 (PQIAPCVIVA…TVARRLIEDT (124 aa)). Positions 158, 174, and 178 each coordinate a divalent metal cation. The Nudix box signature appears at 159-180 (GFVEVGETLEQAVSREVLEESN). Position 192 to 199 (192 to 199 (QPWPFPHS)) interacts with substrate. E219 contributes to the a divalent metal cation binding site. Substrate is bound at residue A241.

It belongs to the Nudix hydrolase family. NudC subfamily. As to quaternary structure, homodimer. Requires Mg(2+) as cofactor. It depends on Mn(2+) as a cofactor. Zn(2+) serves as cofactor.

The catalysed reaction is a 5'-end NAD(+)-phospho-ribonucleoside in mRNA + H2O = a 5'-end phospho-adenosine-phospho-ribonucleoside in mRNA + beta-nicotinamide D-ribonucleotide + 2 H(+). It carries out the reaction NAD(+) + H2O = beta-nicotinamide D-ribonucleotide + AMP + 2 H(+). It catalyses the reaction NADH + H2O = reduced beta-nicotinamide D-ribonucleotide + AMP + 2 H(+). Functionally, mRNA decapping enzyme that specifically removes the nicotinamide adenine dinucleotide (NAD) cap from a subset of mRNAs by hydrolyzing the diphosphate linkage to produce nicotinamide mononucleotide (NMN) and 5' monophosphate mRNA. The NAD-cap is present at the 5'-end of some mRNAs and stabilizes RNA against 5'-processing. Has preference for mRNAs with a 5'-end purine. Catalyzes the hydrolysis of a broad range of dinucleotide pyrophosphates. This chain is NAD-capped RNA hydrolase NudC, found in Yersinia pestis bv. Antiqua (strain Antiqua).